We begin with the raw amino-acid sequence, 459 residues long: Bifunctional protein GlmU (459 aa).

A pyrophosphorylase region spans residues 1–229 (MSNFAIILAA…FDESLGVNDR (229 aa)). Residues 8–11 (LAAG), Lys-22, Gln-72, and 77–78 (GT) each bind UDP-N-acetyl-alpha-D-glucosamine. Asp-102 is a Mg(2+) binding site. Residues Gly-139, Glu-154, Asn-169, and Asn-227 each contribute to the UDP-N-acetyl-alpha-D-glucosamine site. Asn-227 contacts Mg(2+). Positions 230–250 (VALATAESVMRRRINHKHMVN) are linker. An N-acetyltransferase region spans residues 251-459 (GVSFVNPEAT…TRLPHHPKNQ (209 aa)). UDP-N-acetyl-alpha-D-glucosamine is bound by residues Arg-332 and Lys-350. His-362 serves as the catalytic Proton acceptor. 2 residues coordinate UDP-N-acetyl-alpha-D-glucosamine: Tyr-365 and Asn-376. Acetyl-CoA-binding positions include Ala-379, 385 to 386 (NY), Ser-404, Ala-422, and Arg-439.

It in the N-terminal section; belongs to the N-acetylglucosamine-1-phosphate uridyltransferase family. This sequence in the C-terminal section; belongs to the transferase hexapeptide repeat family. As to quaternary structure, homotrimer. Mg(2+) serves as cofactor.

Its subcellular location is the cytoplasm. The catalysed reaction is alpha-D-glucosamine 1-phosphate + acetyl-CoA = N-acetyl-alpha-D-glucosamine 1-phosphate + CoA + H(+). It catalyses the reaction N-acetyl-alpha-D-glucosamine 1-phosphate + UTP + H(+) = UDP-N-acetyl-alpha-D-glucosamine + diphosphate. Its pathway is nucleotide-sugar biosynthesis; UDP-N-acetyl-alpha-D-glucosamine biosynthesis; N-acetyl-alpha-D-glucosamine 1-phosphate from alpha-D-glucosamine 6-phosphate (route II): step 2/2. It participates in nucleotide-sugar biosynthesis; UDP-N-acetyl-alpha-D-glucosamine biosynthesis; UDP-N-acetyl-alpha-D-glucosamine from N-acetyl-alpha-D-glucosamine 1-phosphate: step 1/1. The protein operates within bacterial outer membrane biogenesis; LPS lipid A biosynthesis. In terms of biological role, catalyzes the last two sequential reactions in the de novo biosynthetic pathway for UDP-N-acetylglucosamine (UDP-GlcNAc). The C-terminal domain catalyzes the transfer of acetyl group from acetyl coenzyme A to glucosamine-1-phosphate (GlcN-1-P) to produce N-acetylglucosamine-1-phosphate (GlcNAc-1-P), which is converted into UDP-GlcNAc by the transfer of uridine 5-monophosphate (from uridine 5-triphosphate), a reaction catalyzed by the N-terminal domain. The chain is Bifunctional protein GlmU from Streptococcus pneumoniae (strain Hungary19A-6).